The sequence spans 115 residues: MSQIVTLKKNYQFRRVFRYGQSYATKYIVLFVLENSLNINRVGFSVGKKVGNSVTRNRVKRLLREVYRLNNPNMMQGYDLILLARFRADELDYHKCQREFIRLTKKSKLLQKNVI.

Belongs to the RnpA family. As to quaternary structure, consists of a catalytic RNA component (M1 or rnpB) and a protein subunit.

It carries out the reaction Endonucleolytic cleavage of RNA, removing 5'-extranucleotides from tRNA precursor.. RNaseP catalyzes the removal of the 5'-leader sequence from pre-tRNA to produce the mature 5'-terminus. It can also cleave other RNA substrates such as 4.5S RNA. The protein component plays an auxiliary but essential role in vivo by binding to the 5'-leader sequence and broadening the substrate specificity of the ribozyme. This chain is Ribonuclease P protein component, found in Natranaerobius thermophilus (strain ATCC BAA-1301 / DSM 18059 / JW/NM-WN-LF).